A 546-amino-acid chain; its full sequence is Chaperonin GroEL (546 aa).

ATP-binding positions include 30-33, K51, 87-91, G415, 479-481, and D495; these read TLGP, DGTTT, and NAA.

The protein belongs to the chaperonin (HSP60) family. As to quaternary structure, forms a cylinder of 14 subunits composed of two heptameric rings stacked back-to-back. Interacts with the co-chaperonin GroES.

The protein localises to the cytoplasm. It carries out the reaction ATP + H2O + a folded polypeptide = ADP + phosphate + an unfolded polypeptide.. Together with its co-chaperonin GroES, plays an essential role in assisting protein folding. The GroEL-GroES system forms a nano-cage that allows encapsulation of the non-native substrate proteins and provides a physical environment optimized to promote and accelerate protein folding. The chain is Chaperonin GroEL from Pseudomonas putida (strain ATCC 700007 / DSM 6899 / JCM 31910 / BCRC 17059 / LMG 24140 / F1).